The following is a 202-amino-acid chain: Translation initiation factor IF-3 (202 aa).

This sequence belongs to the IF-3 family. As to quaternary structure, monomer.

The protein resides in the cytoplasm. In terms of biological role, IF-3 binds to the 30S ribosomal subunit and shifts the equilibrium between 70S ribosomes and their 50S and 30S subunits in favor of the free subunits, thus enhancing the availability of 30S subunits on which protein synthesis initiation begins. The chain is Translation initiation factor IF-3 from Prochlorococcus marinus (strain MIT 9211).